Reading from the N-terminus, the 185-residue chain is Ribosome-recycling factor (185 aa).

The interval 132-152 (RRDANEQLKKMEKDSELTEDD) is disordered.

It belongs to the RRF family.

Its subcellular location is the cytoplasm. Its function is as follows. Responsible for the release of ribosomes from messenger RNA at the termination of protein biosynthesis. May increase the efficiency of translation by recycling ribosomes from one round of translation to another. The chain is Ribosome-recycling factor from Alkaliphilus metalliredigens (strain QYMF).